We begin with the raw amino-acid sequence, 156 residues long: Small ribosomal subunit protein uS7 (156 aa).

The protein belongs to the universal ribosomal protein uS7 family. As to quaternary structure, part of the 30S ribosomal subunit. Contacts proteins S9 and S11.

Functionally, one of the primary rRNA binding proteins, it binds directly to 16S rRNA where it nucleates assembly of the head domain of the 30S subunit. Is located at the subunit interface close to the decoding center, probably blocks exit of the E-site tRNA. The protein is Small ribosomal subunit protein uS7 of Shewanella loihica (strain ATCC BAA-1088 / PV-4).